A 277-amino-acid chain; its full sequence is Phosphatidylglycerol--prolipoprotein diacylglyceryl transferase (277 aa).

Helical transmembrane passes span 11 to 31 (IIFS…LISF), 55 to 75 (LLYI…IIFY), 93 to 113 (GGMS…YLSL), and 117 to 137 (VKIL…LGAG). Residue Arg138 coordinates a 1,2-diacyl-sn-glycero-3-phospho-(1'-sn-glycerol). 3 consecutive transmembrane segments (helical) span residues 192–212 (PSQL…IYFF), 220–240 (GSIS…SEFF), and 256–276 (MGQI…NLFI).

This sequence belongs to the Lgt family.

The protein resides in the cell inner membrane. It catalyses the reaction L-cysteinyl-[prolipoprotein] + a 1,2-diacyl-sn-glycero-3-phospho-(1'-sn-glycerol) = an S-1,2-diacyl-sn-glyceryl-L-cysteinyl-[prolipoprotein] + sn-glycerol 1-phosphate + H(+). It functions in the pathway protein modification; lipoprotein biosynthesis (diacylglyceryl transfer). Functionally, catalyzes the transfer of the diacylglyceryl group from phosphatidylglycerol to the sulfhydryl group of the N-terminal cysteine of a prolipoprotein, the first step in the formation of mature lipoproteins. This is Phosphatidylglycerol--prolipoprotein diacylglyceryl transferase from Buchnera aphidicola subsp. Schizaphis graminum (strain Sg).